The following is a 170-amino-acid chain: Adenine phosphoribosyltransferase (170 aa).

Belongs to the purine/pyrimidine phosphoribosyltransferase family. As to quaternary structure, homodimer.

The protein localises to the cytoplasm. It carries out the reaction AMP + diphosphate = 5-phospho-alpha-D-ribose 1-diphosphate + adenine. It participates in purine metabolism; AMP biosynthesis via salvage pathway; AMP from adenine: step 1/1. Catalyzes a salvage reaction resulting in the formation of AMP, that is energically less costly than de novo synthesis. In Thermosipho africanus (strain TCF52B), this protein is Adenine phosphoribosyltransferase.